We begin with the raw amino-acid sequence, 94 residues long: Small ribosomal subunit protein bS6 (94 aa).

Belongs to the bacterial ribosomal protein bS6 family.

Its function is as follows. Binds together with bS18 to 16S ribosomal RNA. The sequence is that of Small ribosomal subunit protein bS6 from Clostridium botulinum (strain 657 / Type Ba4).